A 289-amino-acid chain; its full sequence is Geranylgeranyl diphosphate synthase (289 aa).

Residues R43 and H73 each contribute to the isopentenyl diphosphate site. Residues D80 and D86 each contribute to the Mg(2+) site. R91 is a (2E,6E)-farnesyl diphosphate binding site. R92 provides a ligand contact to isopentenyl diphosphate. 3 residues coordinate (2E,6E)-farnesyl diphosphate: K170, T171, and Q205.

Belongs to the FPP/GGPP synthase family. The cofactor is Mg(2+).

The enzyme catalyses isopentenyl diphosphate + (2E,6E)-farnesyl diphosphate = (2E,6E,10E)-geranylgeranyl diphosphate + diphosphate. Its pathway is isoprenoid biosynthesis; geranylgeranyl diphosphate biosynthesis; geranylgeranyl diphosphate from farnesyl diphosphate and isopentenyl diphosphate: step 1/1. Catalyzes the condensation of farnesyl diphosphate (FPP) and isopentenyl diphosphate (IPP) to yield geranylgeranyl diphosphate (GGPP) needed for biosynthesis of carotenoids and diterpenes. The sequence is that of Geranylgeranyl diphosphate synthase (crtE) from Rhodobacter capsulatus (strain ATCC BAA-309 / NBRC 16581 / SB1003).